We begin with the raw amino-acid sequence, 638 residues long: MSKPPPQHQSKNANNSLSSPVSDKQSNDSRQLLLAHLYNYFKTNGLEETAQALLIECNNTIPKATTNSKGYSLDNSGPDQKDTFLDQWWGLLWSIQSSINPNLNQMTNPSGILTPQHQMIVQQRMLQQQQQQAQQQQQQAQQQQAQQQQQQQQLLQQQRLQQQAMIQQQHQQQLINNLSARQQQVGLSTTTNQMGPPGSNSNNLQSNMSPNNEQLQSQARLQQLKLQFQQQQQQQLQQQQQQLQLQQQQQQQQQQQQQQQQQQQQQQRQQQRQRQKKFQRQLSTSSQKSPVINNGQPQQQLQQDQRPASAPQNQPTPGNNNNNNNNTNAVSPKLHRQSVDDYQMNLLQMENQNNSQRQKYLNNQQTRNSQQQQQQQQSQSQSQQSSPFQPPAQQPKNSTTTSTNTTTSRAQKSSRKQQPKNSRRQSVQQQQQQQPQQQPQQSQQMSTSSQSFTAANNSNNVNNTFDISPQIQDQGMLSTKEQQQQPQQPQPQPQSQPQSQSQSLPSNNNNNNNNKQDVVNVVFDDAFFSGNLLLDDFNEFANSTSNNGNGNGNNDMNSQFNNTQTERIMFSMPPNQNQNQFPSQSGDGGGGGGGSMQPNFFEGIELGDGNNSGNGDDDDAPIITTDWLSSMGSGPGYE.

A disordered region spans residues 1–26 (MSKPPPQHQSKNANNSLSSPVSDKQS). Positions 8–26 (HQSKNANNSLSSPVSDKQS) are enriched in polar residues. The 33-residue stretch at 29-61 (SRQLLLAHLYNYFKTNGLEETAQALLIECNNTI) folds into the LisH domain. Disordered stretches follow at residues 187–216 (LSTT…EQLQ), 270–331 (QQRQ…NAVS), 362–515 (NNQQ…NNNK), and 572–638 (MPPN…PGYE). Residues 283-295 (STSSQKSPVINNG) are compositionally biased toward polar residues. 3 stretches are compositionally biased toward low complexity: residues 296–328 (QPQQ…NNTN), 369–387 (SQQQ…QSSP), and 394–408 (QPKN…TTTS). The segment covering 412–423 (KSSRKQQPKNSR) has biased composition (basic residues). Residues 425–465 (QSVQQQQQQQPQQQPQQSQQMSTSSQSFTAANNSNNVNNTF) show a composition bias toward low complexity. Residues 466–481 (DISPQIQDQGMLSTKE) show a composition bias toward polar residues. 2 stretches are compositionally biased toward low complexity: residues 495-515 (SQPQ…NNNK) and 572-585 (MPPN…PSQS). Residues 586-595 (GDGGGGGGGS) show a composition bias toward gly residues.

It belongs to the MSS11 family. In terms of assembly, interacts with FLO8.

It is found in the cytoplasm. The protein localises to the nucleus. Its function is as follows. Transcription factor that regulates pseudohyphal differentiation, invasive growth, floculation, adhesion and starch metabolism in response to nutrient availability. In Candida albicans (strain SC5314 / ATCC MYA-2876) (Yeast), this protein is Transcription activator MSS11 (MSS11).